The sequence spans 214 residues: Probable transaldolase (214 aa).

Lys-83 acts as the Schiff-base intermediate with substrate in catalysis.

This sequence belongs to the transaldolase family. Type 3B subfamily.

Its subcellular location is the cytoplasm. The catalysed reaction is D-sedoheptulose 7-phosphate + D-glyceraldehyde 3-phosphate = D-erythrose 4-phosphate + beta-D-fructose 6-phosphate. Its pathway is carbohydrate degradation; pentose phosphate pathway; D-glyceraldehyde 3-phosphate and beta-D-fructose 6-phosphate from D-ribose 5-phosphate and D-xylulose 5-phosphate (non-oxidative stage): step 2/3. Its function is as follows. Transaldolase is important for the balance of metabolites in the pentose-phosphate pathway. The chain is Probable transaldolase from Brevibacillus brevis (strain 47 / JCM 6285 / NBRC 100599).